We begin with the raw amino-acid sequence, 60 residues long: Large ribosomal subunit protein bL32 (60 aa).

This sequence belongs to the bacterial ribosomal protein bL32 family.

In Thermosipho melanesiensis (strain DSM 12029 / CIP 104789 / BI429), this protein is Large ribosomal subunit protein bL32.